The sequence spans 162 residues: Phosphopantetheine adenylyltransferase (162 aa).

Thr-9 is a substrate binding site. ATP-binding positions include 9-10 (TF) and His-17. Residues Lys-41, Leu-77, and Arg-91 each contribute to the substrate site. Residues 92 to 94 (GLR), Glu-102, and 127 to 133 (RQAIASK) contribute to the ATP site.

This sequence belongs to the bacterial CoaD family. Homohexamer. The cofactor is Mg(2+).

It is found in the cytoplasm. It catalyses the reaction (R)-4'-phosphopantetheine + ATP + H(+) = 3'-dephospho-CoA + diphosphate. The protein operates within cofactor biosynthesis; coenzyme A biosynthesis; CoA from (R)-pantothenate: step 4/5. Its function is as follows. Reversibly transfers an adenylyl group from ATP to 4'-phosphopantetheine, yielding dephospho-CoA (dPCoA) and pyrophosphate. This chain is Phosphopantetheine adenylyltransferase, found in Cereibacter sphaeroides (strain ATCC 17025 / ATH 2.4.3) (Rhodobacter sphaeroides).